The following is a 444-amino-acid chain: Adenylosuccinate synthetase (444 aa).

GTP is bound by residues 13 to 19 (GDEGKGK) and 41 to 43 (GHT). Catalysis depends on aspartate 14, which acts as the Proton acceptor. Mg(2+) contacts are provided by aspartate 14 and glycine 41. IMP is bound by residues 14-17 (DEGK), 39-42 (NAGH), threonine 129, arginine 143, glutamine 224, threonine 239, and arginine 303. Histidine 42 acts as the Proton donor in catalysis. 299 to 305 (TTTGRRR) lines the substrate pocket. GTP-binding positions include arginine 305, 331 to 333 (KLD), and 413 to 415 (SLG).

This sequence belongs to the adenylosuccinate synthetase family. Homodimer. Requires Mg(2+) as cofactor.

It is found in the cytoplasm. The catalysed reaction is IMP + L-aspartate + GTP = N(6)-(1,2-dicarboxyethyl)-AMP + GDP + phosphate + 2 H(+). Its pathway is purine metabolism; AMP biosynthesis via de novo pathway; AMP from IMP: step 1/2. In terms of biological role, plays an important role in the de novo pathway of purine nucleotide biosynthesis. Catalyzes the first committed step in the biosynthesis of AMP from IMP. This chain is Adenylosuccinate synthetase, found in Synechocystis sp. (strain ATCC 27184 / PCC 6803 / Kazusa).